Here is a 393-residue protein sequence, read N- to C-terminus: Phosphoglycerate kinase (393 aa).

Residues 21–23 (DLN), Arg-36, 59–62 (HLGR), Arg-113, and Arg-146 contribute to the substrate site. Residues Lys-197, Glu-319, and 345–348 (GGDT) each bind ATP.

The protein belongs to the phosphoglycerate kinase family. In terms of assembly, monomer.

It localises to the cytoplasm. It catalyses the reaction (2R)-3-phosphoglycerate + ATP = (2R)-3-phospho-glyceroyl phosphate + ADP. The protein operates within carbohydrate degradation; glycolysis; pyruvate from D-glyceraldehyde 3-phosphate: step 2/5. The polypeptide is Phosphoglycerate kinase (Nitratidesulfovibrio vulgaris (strain DSM 19637 / Miyazaki F) (Desulfovibrio vulgaris)).